A 199-amino-acid chain; its full sequence is Ribonuclease HII (199 aa).

The region spanning 7 to 196 (PWVCGVDEAG…VRELMANEKD (190 aa)) is the RNase H type-2 domain. Positions 13, 14, and 105 each coordinate a divalent metal cation.

It belongs to the RNase HII family. Requires Mn(2+) as cofactor. Mg(2+) serves as cofactor.

Its subcellular location is the cytoplasm. It carries out the reaction Endonucleolytic cleavage to 5'-phosphomonoester.. Endonuclease that specifically degrades the RNA of RNA-DNA hybrids. The polypeptide is Ribonuclease HII (Nitrosospira multiformis (strain ATCC 25196 / NCIMB 11849 / C 71)).